The primary structure comprises 362 residues: G-protein coupled receptor 4 (362 aa).

The Extracellular portion of the chain corresponds to 1–8; the sequence is MGNRTLEG. A glycan (N-linked (GlcNAc...) asparagine) is linked at Asn-3. The chain crosses the membrane as a helical span at residues 9-45; the sequence is CHVDSRMDHLFPPSLYIFVIGVGLPTNCLALWAAYRQ. Disulfide bonds link Cys-9/Cys-258 and Cys-90/Cys-168. The Cytoplasmic portion of the chain corresponds to 46-49; it reads VRQR. Residues 50–80 traverse the membrane as a helical segment; the sequence is NELGVYLMNLSIADLLYICTLPLWVDYFLHH. The Extracellular segment spans residues 81-85; that stretch reads DNWIH. A helical transmembrane segment spans residues 86-121; sequence GPGSCKLFGFIFYTNIYISIAFLCCISVDRYLAVAH. The Cytoplasmic portion of the chain corresponds to 122–129; the sequence is PLRFARLR. A helical membrane pass occupies residues 130-156; the sequence is RVKTAVAVSSVVWATELGANSAPLFHD. At 157-172 the chain is on the extracellular side; sequence ELFRDRYNHTFCFEKF. Positions 157–172 are extracellular loop 2 (ECL2); it reads ELFRDRYNHTFCFEKF. Asn-164 is a glycosylation site (N-linked (GlcNAc...) asparagine). The helical transmembrane segment at 173–210 threads the bilayer; the sequence is PMEGWVAWMNLYRVFVGFLFPWALMLLSYRGILRAVRG. The Cytoplasmic portion of the chain corresponds to 211–214; that stretch reads SVST. The helical transmembrane segment at 215 to 250 threads the bilayer; sequence ERQEKVKIKRLALSLIAIVLVCFAPYHVLLLSRSAV. Over 251-260 the chain is Extracellular; that stretch reads YLRRPRDCGF. The helical transmembrane segment at 261 to 289 threads the bilayer; the sequence is EERVFSAYHSSLAFTSLNCVADPILYCLV. Residues 290 to 362 lie on the Cytoplasmic side of the membrane; it reads NEGARSDVAK…VQLKMLPPAQ (73 aa).

The protein belongs to the G-protein coupled receptor 1 family.

Its subcellular location is the cell membrane. With respect to regulation, activated by a network of residues that connects an extracellular-facing cavity to Glu-145, a conserved charged residue buried in the transmembrane core of the receptor. Protonation likely drives conformational changes in extracellular loop 2 (ECL2), which stabilizes movement of transmembrane 3 (TM3) and a series of rearrangements that connect the extracellular-facing cavity to Glu-145, a residue only conserved in proton-sensing G-protein coupled receptors. Functionally, proton-sensing G-protein coupled receptor activated by extracellular pH, which is required to monitor pH changes and generate adaptive reactions. Activated by an optimal pH of 6.8-7.2. Ligand binding causes a conformation change that triggers signaling via guanine nucleotide-binding proteins (G proteins) and modulates the activity of downstream effectors, such as adenylate cyclase. GPR4 is mainly coupled to G(s) G proteins and mediates activation of adenylate cyclase activity. May also couple with G(q) and G(12)/G(13) G proteins. Acts as a key regulator of respiratory sensitivity to CO2/H(+) in brain retrotrapezoid nucleus neurons: acts by mediating detection of protons generated by the formation of carbonic acid in the blood, an important mechanism to impulse to breathe. Also acts as a regulator of acid secretion in the kidney collecting duct by maintaining acid-base homeostasis in the kidney. Acidosis-induced GPR4 activation increases paracellular gap formation and permeability of vascular endothelial cells, possibly through the G(12)/G(13)/Rho GTPase signaling pathway. This Bos taurus (Bovine) protein is G-protein coupled receptor 4 (GPR4).